Reading from the N-terminus, the 425-residue chain is Formyl-CoA:oxalate CoA-transferase (425 aa).

CoA contacts are provided by residues 17 to 18 (QS), R38, 72 to 75 (LDTK), 96 to 98 (NFG), R104, and 136 to 139 (KVYE). Residue D168 is the Nucleophile of the active site. A substrate-binding site is contributed by 247 to 249 (GGQ).

It belongs to the CoA-transferase III family. Frc subfamily. Homodimer.

It carries out the reaction formyl-CoA + oxalate = oxalyl-CoA + formate. Its pathway is metabolic intermediate degradation; oxalate degradation; CO(2) and formate from oxalate: step 1/2. In terms of biological role, involved in the catabolism of oxalate and in the adapatation to low pH via the induction of the oxalate-dependent acid tolerance response (ATR). Catalyzes the transfer of the CoA moiety from formyl-CoA to oxalate. The protein is Formyl-CoA:oxalate CoA-transferase of Bradyrhizobium sp. (strain ORS 278).